Here is a 183-residue protein sequence, read N- to C-terminus: MADMKSIQADARERMGKAIEALESNLSVLRTGRANPGILKKVIVDYYGSTMPIDQVASITTPDARTLVITPWDRGALGPIEKAIRDSDLGLNPNNKGDTIFISLPMLTEERRKDLVKNAKNYAEDARIAVRNIRKHALDEVKKVEGVGDDEIKRGEAEVQKITDEFIARVDSTFHKKEQEILG.

It belongs to the RRF family.

It localises to the cytoplasm. Its function is as follows. Responsible for the release of ribosomes from messenger RNA at the termination of protein biosynthesis. May increase the efficiency of translation by recycling ribosomes from one round of translation to another. The chain is Ribosome-recycling factor from Deinococcus deserti (strain DSM 17065 / CIP 109153 / LMG 22923 / VCD115).